Here is a 417-residue protein sequence, read N- to C-terminus: Phosphoglycerate kinase, cytosolic (417 aa).

(2R)-3-phosphoglycerate-binding residues include Val-23, Asp-24, Phe-25, Asn-26, Arg-39, Ser-61, His-62, Gly-64, Arg-65, Arg-132, His-168, and Arg-169. The ADP site is built by Gly-214 and Ala-215. Gly-214 lines the CDP pocket. AMP-binding residues include Ala-215 and Lys-216. Ala-215 is a binding site for ATP. Ala-215 serves as a coordination point for Mg(2+). Lys-216 is a (2R)-3-phosphoglycerate binding site. CDP is bound at residue Asp-219. Asp-219 serves as a coordination point for Mg(2+). 2 residues coordinate ADP: Lys-220 and Gly-238. Lys-220 contributes to the AMP binding site. Residue Lys-220 participates in ATP binding. Gly-238 serves as a coordination point for CDP. Ala-239 and Ala-311 together coordinate AMP. Residues Ala-239 and Ala-311 each coordinate ATP. 2 residues coordinate ADP: Ala-311 and Asn-335. Positions 336 and 341 each coordinate CDP. ADP is bound by residues Phe-341, Glu-342, Asp-374, and Thr-375. Residue Glu-342 coordinates AMP. 3 residues coordinate ATP: Glu-342, Asp-374, and Thr-375. A Mg(2+)-binding site is contributed by Asp-374.

The protein belongs to the phosphoglycerate kinase family. In terms of assembly, monomer. Mg(2+) serves as cofactor.

It is found in the cytoplasm. The catalysed reaction is (2R)-3-phosphoglycerate + ATP = (2R)-3-phospho-glyceroyl phosphate + ADP. It participates in carbohydrate degradation; glycolysis; pyruvate from D-glyceraldehyde 3-phosphate: step 2/5. The protein is Phosphoglycerate kinase, cytosolic (PGKB) of Crithidia fasciculata.